The following is a 166-amino-acid chain: Regulator of ribonuclease activity A (166 aa).

Belongs to the RraA family. In terms of assembly, homotrimer. Binds to both RNA-binding sites in the C-terminal region of Rne and to RhlB.

Its subcellular location is the cytoplasm. In terms of biological role, globally modulates RNA abundance by binding to RNase E (Rne) and regulating its endonucleolytic activity. Can modulate Rne action in a substrate-dependent manner by altering the composition of the degradosome. Modulates RNA-binding and helicase activities of the degradosome. The chain is Regulator of ribonuclease activity A from Glaesserella parasuis serovar 5 (strain SH0165) (Haemophilus parasuis).